The chain runs to 167 residues: uncharacterized protein (167 aa).

The first 25 residues, 1–25 (MPFSVTKFSLIFVALLLAEALVAQS), serve as a signal peptide directing secretion.

This is an uncharacterized protein from Caenorhabditis elegans.